A 446-amino-acid polypeptide reads, in one-letter code: Protein dyf-7 (446 aa).

An N-terminal signal peptide occupies residues M1–A24. A ZP domain is found at D35–S295. An intrachain disulfide couples C211 to C273. The chain crosses the membrane as a helical span at residues I377–I397.

In terms of assembly, monomer under reducing conditions. Homodimer under non-reducing conditions. May also form higher order oligomers. Post-translationally, proteolytically cleaved and secreted in vitro. In the embryo, expressed in the excretory cell and, during dendrite formation, in the non-neuronal cells surrounding the sensory neurons, including hypodermal cells.

The protein localises to the cell membrane. Its subcellular location is the cell projection. The protein resides in the dendrite. It is found in the secreted. Required for permeability of amphid and phasmid neurons to external dyes, chemotaxis to ammonium chloride, avoidance of high osmotic stimuli, male mating and dauer formation. Along with dex-1, enables neurite growth and maintenance by anchoring amphid dendritic tips during neuron cell body migration in embryonic and larval development. In Caenorhabditis elegans, this protein is Protein dyf-7.